The primary structure comprises 312 residues: Methionyl-tRNA formyltransferase (312 aa).

112 to 115 (SLLP) is a (6S)-5,6,7,8-tetrahydrofolate binding site.

Belongs to the Fmt family.

The enzyme catalyses L-methionyl-tRNA(fMet) + (6R)-10-formyltetrahydrofolate = N-formyl-L-methionyl-tRNA(fMet) + (6S)-5,6,7,8-tetrahydrofolate + H(+). Its function is as follows. Attaches a formyl group to the free amino group of methionyl-tRNA(fMet). The formyl group appears to play a dual role in the initiator identity of N-formylmethionyl-tRNA by promoting its recognition by IF2 and preventing the misappropriation of this tRNA by the elongation apparatus. In Magnetococcus marinus (strain ATCC BAA-1437 / JCM 17883 / MC-1), this protein is Methionyl-tRNA formyltransferase.